Here is a 541-residue protein sequence, read N- to C-terminus: Chaperonin GroEL (541 aa).

Residues 29–32 (TLGP), 86–90 (DGTTT), Gly-413, 477–479 (DAL), and Asp-493 each bind ATP.

The protein belongs to the chaperonin (HSP60) family. Forms a cylinder of 14 subunits composed of two heptameric rings stacked back-to-back. Interacts with the co-chaperonin GroES.

It is found in the cytoplasm. It carries out the reaction ATP + H2O + a folded polypeptide = ADP + phosphate + an unfolded polypeptide.. Together with its co-chaperonin GroES, plays an essential role in assisting protein folding. The GroEL-GroES system forms a nano-cage that allows encapsulation of the non-native substrate proteins and provides a physical environment optimized to promote and accelerate protein folding. This Clostridium botulinum (strain 657 / Type Ba4) protein is Chaperonin GroEL.